The primary structure comprises 392 residues: Succinate--CoA ligase [ADP-forming] subunit beta (392 aa).

Residues 9-236 (RDLFERHGLP…QAAVDPLEQA (228 aa)) enclose the ATP-grasp domain. ATP contacts are provided by residues K45, 52–54 (GRG), A94, and E99. Mg(2+) contacts are provided by N191 and D205. Residues N256 and 318–320 (GIT) contribute to the substrate site.

The protein belongs to the succinate/malate CoA ligase beta subunit family. In terms of assembly, heterotetramer of two alpha and two beta subunits. The cofactor is Mg(2+).

It carries out the reaction succinate + ATP + CoA = succinyl-CoA + ADP + phosphate. The catalysed reaction is GTP + succinate + CoA = succinyl-CoA + GDP + phosphate. Its pathway is carbohydrate metabolism; tricarboxylic acid cycle; succinate from succinyl-CoA (ligase route): step 1/1. Succinyl-CoA synthetase functions in the citric acid cycle (TCA), coupling the hydrolysis of succinyl-CoA to the synthesis of either ATP or GTP and thus represents the only step of substrate-level phosphorylation in the TCA. The beta subunit provides nucleotide specificity of the enzyme and binds the substrate succinate, while the binding sites for coenzyme A and phosphate are found in the alpha subunit. The sequence is that of Succinate--CoA ligase [ADP-forming] subunit beta from Salinispora arenicola (strain CNS-205).